Reading from the N-terminus, the 320-residue chain is cUMP-AMP-activated phospholipase (320 aa).

The 182-residue stretch at 23-204 (LALDGGGAKG…CANNPTLFAI (182 aa)) folds into the PNPLA domain. Residues 27–32 (GGGAKG) carry the GXGXXG motif. The GXSXG motif lies at 59-63 (GTSTG). S61 (nucleophile) is an active-site residue. Residue D191 is the Proton acceptor of the active site. The short motif at 191–193 (DGG) is the DGA/G element.

It belongs to the patatin family.

The enzyme catalyses a 1,2-diacyl-sn-glycero-3-phosphocholine + H2O = a 2-acyl-sn-glycero-3-phosphocholine + a fatty acid + H(+). Its activity is regulated as follows. Phospholipase activity is specifically activated upon 3',3'-cUAMP binding. Is not activated by the other cyclic dinucleotides 3',3'-cGAMP, 3',3'-c-diAMP and 3',3'-c-diGMP. Therefore, is specifically activated by only the nucleotide synthesized from its adjacently encoded nucleotidyltransferase (CdnE). Effector phospholipase of a CBASS antivirus system. CBASS (cyclic oligonucleotide-based antiphage signaling system) provides immunity against bacteriophage. The CD-NTase protein synthesizes cyclic nucleotides in response to infection; these serve as specific second messenger signals. The signals activate a diverse range of effectors, leading to bacterial cell death and thus abortive phage infection. A type II-A(UA) CBASS system. In terms of biological role, phospholipase that is activated upon binding to the cyclic dinucleotide (CDN) second messenger 3',3'-cyclic UMP-AMP (3',3'-cUAMP). This Escherichia coli protein is cUMP-AMP-activated phospholipase.